We begin with the raw amino-acid sequence, 284 residues long: MKLIAVGDNVVDYYQDQETFYPGGNALNVAVLAKRLGHESSYIGIVGNDEAAAHLLNVLKLEQVNADYIRQAHGENGMAIVTLDEQGDRIFVRSNKGGIQSRLRLAFQEKDVSFISGHDLLHTSVYSRLENDLPQLCGLVPVSFDFSTNREDDYLRRVCPYVTYAFFSGSDLSESECGELAKTAHGYGAKMVCMTRGGQGAILSAGDRVYHQPIVEADIIDTLGAGDSFIAGFLTAFCVKQDITYALRQAAETAAKTCGVYGAFGYGYPYRLEDGGSSEKTRIL.

It belongs to the carbohydrate kinase PfkB family.

Catalyzes the phosphorylation of a range of fructosamines to fructosamine 6-phosphates. In Bacillus subtilis (strain 168), this protein is Fructosamine kinase FrlD (frlD).